Reading from the N-terminus, the 393-residue chain is Elongation factor Tu (393 aa).

One can recognise a tr-type G domain in the interval 10-202 (KPHVNIGTIG…AVDEYIPTPE (193 aa)). The tract at residues 19–26 (GHVDHGKT) is G1. 19 to 26 (GHVDHGKT) contributes to the GTP binding site. Threonine 26 contributes to the Mg(2+) binding site. The G2 stretch occupies residues 60-64 (GITIN). The segment at 81–84 (DCPG) is G3. GTP-binding positions include 81 to 85 (DCPGH) and 136 to 139 (NKAD). A G4 region spans residues 136-139 (NKAD). A G5 region spans residues 174–176 (SAL).

Belongs to the TRAFAC class translation factor GTPase superfamily. Classic translation factor GTPase family. EF-Tu/EF-1A subfamily. Monomer.

The protein localises to the cytoplasm. The enzyme catalyses GTP + H2O = GDP + phosphate + H(+). Functionally, GTP hydrolase that promotes the GTP-dependent binding of aminoacyl-tRNA to the A-site of ribosomes during protein biosynthesis. The protein is Elongation factor Tu of Clostridium novyi (strain NT).